A 270-amino-acid polypeptide reads, in one-letter code: UPF0354 protein BT9727_4425 (270 aa).

Belongs to the UPF0354 family.

The chain is UPF0354 protein BT9727_4425 from Bacillus thuringiensis subsp. konkukian (strain 97-27).